We begin with the raw amino-acid sequence, 268 residues long: Lectin ESA-2 (268 aa).

A run of 4 repeats spans residues 1–67 (GRYT…RRGE), 68–135 (SNVY…QSGG), 136–202 (DTYN…LSGA), and 203–268 (NNYS…VATS). The tract at residues 1-268 (GRYTVQNQWG…PIGFKGVATS (268 aa)) is 4 X approximate tandem repeats.

In terms of assembly, monomer.

Its function is as follows. Lectin specific for high mannose N-glycans, recognizes the branched moiety of these glycans. Does not recognize other types of N-glycans or monosaccharides. Agglutinates trypsin-treated sheep and rabbit erythrocytes and untreated sheep erythrocytes. Has mitogenic activity on mouse lymphocytes. Does not require metal ions for activity. This chain is Lectin ESA-2, found in Eucheuma serra (Marine red alga).